Here is a 474-residue protein sequence, read N- to C-terminus: tRNA-2-methylthio-N(6)-dimethylallyladenosine synthase (474 aa).

Residues 3-120 (KKLHIKTWGC…LPEMINSVRG (118 aa)) form the MTTase N-terminal domain. [4Fe-4S] cluster is bound by residues cysteine 12, cysteine 49, cysteine 83, cysteine 157, cysteine 161, and cysteine 164. A Radical SAM core domain is found at 143–375 (RADGPTAFVS…QDRINQQTTA (233 aa)). In terms of domain architecture, TRAM spans 378-441 (RRKLGTVQRI…ANSLRGMLLR (64 aa)).

Belongs to the methylthiotransferase family. MiaB subfamily. Monomer. The cofactor is [4Fe-4S] cluster.

Its subcellular location is the cytoplasm. It carries out the reaction N(6)-dimethylallyladenosine(37) in tRNA + (sulfur carrier)-SH + AH2 + 2 S-adenosyl-L-methionine = 2-methylsulfanyl-N(6)-dimethylallyladenosine(37) in tRNA + (sulfur carrier)-H + 5'-deoxyadenosine + L-methionine + A + S-adenosyl-L-homocysteine + 2 H(+). Its function is as follows. Catalyzes the methylthiolation of N6-(dimethylallyl)adenosine (i(6)A), leading to the formation of 2-methylthio-N6-(dimethylallyl)adenosine (ms(2)i(6)A) at position 37 in tRNAs that read codons beginning with uridine. In Erwinia tasmaniensis (strain DSM 17950 / CFBP 7177 / CIP 109463 / NCPPB 4357 / Et1/99), this protein is tRNA-2-methylthio-N(6)-dimethylallyladenosine synthase.